Consider the following 514-residue polypeptide: Membrane-bound lytic murein transglycosylase F (514 aa).

A signal peptide spans 1–30; that stretch reads MKKLKINYLFIGILTLLLAAALWPSIPWFG. Residues 31–269 are non-LT domain; that stretch reads KTENHIAAIQ…RIEEKYLGHG (239 aa). The tract at residues 270 to 514 is LT domain; that stretch reads DDFDYVDTRS…LFTPQKKEEK (245 aa). Glu314 is a catalytic residue.

It in the N-terminal section; belongs to the bacterial solute-binding protein 3 family. This sequence in the C-terminal section; belongs to the transglycosylase Slt family.

Its subcellular location is the cell outer membrane. It carries out the reaction Exolytic cleavage of the (1-&gt;4)-beta-glycosidic linkage between N-acetylmuramic acid (MurNAc) and N-acetylglucosamine (GlcNAc) residues in peptidoglycan, from either the reducing or the non-reducing ends of the peptidoglycan chains, with concomitant formation of a 1,6-anhydrobond in the MurNAc residue.. Its function is as follows. Murein-degrading enzyme that degrades murein glycan strands and insoluble, high-molecular weight murein sacculi, with the concomitant formation of a 1,6-anhydromuramoyl product. Lytic transglycosylases (LTs) play an integral role in the metabolism of the peptidoglycan (PG) sacculus. Their lytic action creates space within the PG sacculus to allow for its expansion as well as for the insertion of various structures such as secretion systems and flagella. The polypeptide is Membrane-bound lytic murein transglycosylase F (Salmonella paratyphi A (strain ATCC 9150 / SARB42)).